We begin with the raw amino-acid sequence, 369 residues long: Cobalt-precorrin-5B C(1)-methyltransferase (369 aa).

Belongs to the CbiD family.

It carries out the reaction Co-precorrin-5B + S-adenosyl-L-methionine = Co-precorrin-6A + S-adenosyl-L-homocysteine. The protein operates within cofactor biosynthesis; adenosylcobalamin biosynthesis; cob(II)yrinate a,c-diamide from sirohydrochlorin (anaerobic route): step 6/10. Its function is as follows. Catalyzes the methylation of C-1 in cobalt-precorrin-5B to form cobalt-precorrin-6A. This Leptospira borgpetersenii serovar Hardjo-bovis (strain JB197) protein is Cobalt-precorrin-5B C(1)-methyltransferase.